A 119-amino-acid chain; its full sequence is Small ribosomal subunit protein bS16 (119 aa).

It belongs to the bacterial ribosomal protein bS16 family.

This Amoebophilus asiaticus (strain 5a2) protein is Small ribosomal subunit protein bS16.